A 145-amino-acid chain; its full sequence is Meiotically up-regulated gene 124 protein (145 aa).

Transmembrane regions (helical) follow at residues 18 to 38 and 95 to 115; these read IILT…CPSI and FAWS…NFFL.

It is found in the membrane. Its function is as follows. Has a role in meiosis. The polypeptide is Meiotically up-regulated gene 124 protein (mug124) (Schizosaccharomyces pombe (strain 972 / ATCC 24843) (Fission yeast)).